The sequence spans 98 residues: MHGDTPTLHEYMLDLQPETTDLYCYEQLNDSSEEEDEIDGPAGQAEPDRAHYNIVTFCCKCDSTLRLCVQSTHVDIRTLEDLLMGTLGIVCPICSQKP.

The tract at residues 1 to 40 (MHGDTPTLHEYMLDLQPETTDLYCYEQLNDSSEEEDEIDG) is E7 terminal domain. Positions 22–26 (LYCYE) match the LXCXE motif; interaction with host RB1 and TMEM173/STING motif. A zinc finger spans residues 58–94 (CCKCDSTLRLCVQSTHVDIRTLEDLLMGTLGIVCPIC). Positions 76–84 (IRTLEDLLM) match the Nuclear export signal motif.

This sequence belongs to the papillomaviridae E7 protein family. Homodimer. Homooligomer. Interacts with host RB1; this interaction induces dissociation of RB1-E2F1 complex thereby disrupting RB1 activity. Interacts with host EP300; this interaction represses EP300 transcriptional activity. Forms a complex with CHD4 and HDAC1, thereby altering the action of host histone deacetylation. A similar complex involving E7, CHD4 and HDAC2 may also form. Interacts with protein E2; this interaction inhibits E7 oncogenic activity. Post-translationally, highly phosphorylated.

The protein resides in the host cytoplasm. Its subcellular location is the host nucleus. Functionally, plays a role in viral genome replication by driving entry of quiescent cells into the cell cycle. Stimulation of progression from G1 to S phase allows the virus to efficiently use the cellular DNA replicating machinery to achieve viral genome replication. E7 protein has both transforming and trans-activating activities. Induces the disassembly of the E2F1 transcription factor from RB1, with subsequent transcriptional activation of E2F1-regulated S-phase genes. Interferes with host histone deacetylation mediated by HDAC1 and HDAC2, leading to transcription activation. Also plays a role in the inhibition of both antiviral and antiproliferative functions of host interferon alpha. Interaction with host TMEM173/STING impairs the ability of TMEM173/STING to sense cytosolic DNA and promote the production of type I interferon (IFN-alpha and IFN-beta). This Human papillomavirus type 16 protein is Protein E7.